The chain runs to 631 residues: Methanol dehydrogenase [cytochrome c] subunit 1 (631 aa).

Residues 1–32 (MNRNTPKARGASSLAMAVAMGLAVLTTAPATA) form the signal peptide. An intrachain disulfide couples C135 to C136. The Ca(2+) site is built by E209 and N293. The active-site Proton acceptor is the D335. A disulfide bridge links C418 with C447.

The protein belongs to the bacterial PQQ dehydrogenase family. As to quaternary structure, heterotetramer composed of 2 alpha and 2 beta subunits. It depends on pyrroloquinoline quinone as a cofactor. Ca(2+) is required as a cofactor.

The protein resides in the periplasm. It catalyses the reaction 2 Fe(III)-[cytochrome cL] + a primary alcohol = 2 Fe(II)-[cytochrome cL] + an aldehyde + 2 H(+). Catalyzes the oxidation of primary alcohols including methanol. This chain is Methanol dehydrogenase [cytochrome c] subunit 1 (moxF), found in Paracoccus denitrificans.